Consider the following 426-residue polypeptide: Homeobox protein knotted-1-like LET12 (426 aa).

Disordered regions lie at residues 1–26 (MEFQ…QQNA), 85–158 (QTSN…ENSW), and 270–290 (GVAP…DQAD). The segment covering 15 to 24 (QQQQQQQQQQ) has biased composition (low complexity). Residues 104-114 (AGGGSNGGGSG) are compositionally biased toward gly residues. Residues 139–151 (ENNNNNNNNNNNN) are compositionally biased toward low complexity. The ELK domain occupies 327-347 (ELKHELKQGYKEKIVDIREEI). The segment at residues 348 to 411 (LRKRRAGKLP…NQRKRNWHSN (64 aa)) is a DNA-binding region (homeobox; TALE-type). A disordered region spans residues 406–426 (RNWHSNPSTSSSQKSQTQECR). Residues 413–426 (STSSSQKSQTQECR) show a composition bias toward low complexity.

This sequence belongs to the TALE/KNOX homeobox family. As to expression, ubiquitously expressed in the mature plant.

It is found in the nucleus. May have a role to play in formative events in ovule and embryo morphogenesis. The chain is Homeobox protein knotted-1-like LET12 (LET12) from Solanum lycopersicum (Tomato).